The following is an 85-amino-acid chain: Large ribosomal subunit protein eL43 (85 aa).

The C4-type zinc finger occupies 38 to 59 (CPVCGRKAVRRISTGIWQCQKC).

It belongs to the eukaryotic ribosomal protein eL43 family. It depends on Zn(2+) as a cofactor.

In Thermococcus sibiricus (strain DSM 12597 / MM 739), this protein is Large ribosomal subunit protein eL43.